Reading from the N-terminus, the 128-residue chain is Holo-[acyl-carrier-protein] synthase (128 aa).

2 residues coordinate Mg(2+): Asp-9 and Glu-60.

The protein belongs to the P-Pant transferase superfamily. AcpS family. Requires Mg(2+) as cofactor.

The protein resides in the cytoplasm. The catalysed reaction is apo-[ACP] + CoA = holo-[ACP] + adenosine 3',5'-bisphosphate + H(+). Transfers the 4'-phosphopantetheine moiety from coenzyme A to a Ser of acyl-carrier-protein. The protein is Holo-[acyl-carrier-protein] synthase of Buchnera aphidicola subsp. Baizongia pistaciae (strain Bp).